The chain runs to 640 residues: Telomere repeat-binding protein 4 (640 aa).

In terms of domain architecture, Ubiquitin-like spans 343–422; the sequence is VKFSIKSLRI…LGNLGFTLEP (80 aa). The interval 442 to 464 is disordered; the sequence is TDSTKLSERSAASPALETGIPLP. The 60-residue stretch at 530–589 folds into the HTH myb-type domain; the sequence is SQRRTRRPFSVTEVEALVSAVEEVGTGRWRDVKLRSFENASHRTYVDLKDKWKTLVHTAS. Positions 558 to 585 form a DNA-binding region, H-T-H motif; it reads WRDVKLRSFENASHRTYVDLKDKWKTLV.

Homomultimer. Interacts with SNL1 (via PAH2). Interacts with STO. Expressed ubiquitously. Highest expression in flowers and roots.

It localises to the nucleus. Functionally, binds specifically to the plant telomeric double-stranded DNA sequences 5'-TTTAGGG-3'. At least 2 repeats of telomeric sequences are required for binding. Induces DNA bending. In Arabidopsis thaliana (Mouse-ear cress), this protein is Telomere repeat-binding protein 4 (TRP4).